A 733-amino-acid chain; its full sequence is Catalase-peroxidase (733 aa).

A cross-link (tryptophyl-tyrosyl-methioninium (Trp-Tyr) (with M-245)) is located at residues 96-219 (WHSAGTYRTG…LAAVQMGLIY (124 aa)). Histidine 97 acts as the Proton acceptor in catalysis. A cross-link (tryptophyl-tyrosyl-methioninium (Tyr-Met) (with W-96)) is located at residues 219-245 (YVNPEGPNGNPDPLAAAKDIRETFARM). Histidine 260 lines the heme b pocket.

This sequence belongs to the peroxidase family. Peroxidase/catalase subfamily. Homodimer or homotetramer. Heme b serves as cofactor. Formation of the three residue Trp-Tyr-Met cross-link is important for the catalase, but not the peroxidase activity of the enzyme.

It catalyses the reaction H2O2 + AH2 = A + 2 H2O. It carries out the reaction 2 H2O2 = O2 + 2 H2O. Functionally, bifunctional enzyme with both catalase and broad-spectrum peroxidase activity. This Geobacter sp. (strain M21) protein is Catalase-peroxidase.